A 434-amino-acid polypeptide reads, in one-letter code: MSGKLFIILLLLVTPGEARKSFLRFLNIQNPEMLSFTKPEETVIVRSSYEGKRPHSSYLLVKLEDPTVLQVVNVTKTSLDFTDFTINLKTFPGETNLTMQLWESEGRQTRLIEEITNIRVSVFRQTEDSLFQEPIHVNSSVFLLVLLMILLNKCAFGCKIELQVLQTVWKRPLPILLGAVTQFFLMPFCGFLLSQILGLSKAQAFGFVMTCTCPGGGGGYLFALLLEGDVTLAILMACTSTSLALIMMPVNSYLYSCLLGLAGVFHVPVLKIVSTLLFILTPVSIGIVIKHRMPKKAVCLERVVQPLSLTLMLVGVYLAFRMGLVFLRMANLEVFLLGLLVPVLGFSFGYSFAKVYLLPLPVCKTVAIESGMLNSFLALAIIQLSFPQSKAYEASVAPFTVAMCSSCEMLLLLLVYKAKKRPLLSTENEKAPLV.

A signal peptide spans 1–18; it reads MSGKLFIILLLLVTPGEA. At 19 to 129 the chain is on the extracellular side; the sequence is RKSFLRFLNI…VSVFRQTEDS (111 aa). N-linked (GlcNAc...) asparagine glycosylation is found at asparagine 73 and asparagine 96. The chain crosses the membrane as a helical span at residues 130-150; that stretch reads LFQEPIHVNSSVFLLVLLMIL. Residues 151–172 lie on the Cytoplasmic side of the membrane; it reads LNKCAFGCKIELQVLQTVWKRP. Residues 173–193 traverse the membrane as a helical segment; it reads LPILLGAVTQFFLMPFCGFLL. Topologically, residues 194 to 195 are extracellular; it reads SQ. Residues 196–216 form a helical membrane-spanning segment; sequence ILGLSKAQAFGFVMTCTCPGG. Residues 217–232 are Cytoplasmic-facing; sequence GGGYLFALLLEGDVTL. Residues 233–255 form a helical membrane-spanning segment; sequence AILMACTSTSLALIMMPVNSYLY. The Extracellular segment spans residues 256-268; that stretch reads SCLLGLAGVFHVP. A helical transmembrane segment spans residues 269-289; sequence VLKIVSTLLFILTPVSIGIVI. Over 290–306 the chain is Cytoplasmic; sequence KHRMPKKAVCLERVVQP. The chain crosses the membrane as a helical span at residues 307–327; that stretch reads LSLTLMLVGVYLAFRMGLVFL. Topologically, residues 328–331 are extracellular; it reads RMAN. Residues 332 to 352 traverse the membrane as a helical segment; that stretch reads LEVFLLGLLVPVLGFSFGYSF. The Cytoplasmic segment spans residues 353–365; that stretch reads AKVYLLPLPVCKT. A helical membrane pass occupies residues 366 to 386; the sequence is VAIESGMLNSFLALAIIQLSF. Topologically, residues 387 to 395 are extracellular; it reads PQSKAYEAS. The helical transmembrane segment at 396–416 threads the bilayer; the sequence is VAPFTVAMCSSCEMLLLLLVY. Topologically, residues 417 to 434 are cytoplasmic; that stretch reads KAKKRPLLSTENEKAPLV.

The protein belongs to the bile acid:sodium symporter (BASS) (TC 2.A.28) family.

It localises to the membrane. This chain is Sodium/bile acid cotransporter 5 (Slc10a5), found in Rattus norvegicus (Rat).